Consider the following 134-residue polypeptide: NADH-quinone oxidoreductase subunit A 1 (134 aa).

Helical transmembrane passes span 10-30 (LIPL…LLLA), 65-85 (FYLI…ILAW), and 94-114 (IPGL…LVWL).

The protein belongs to the complex I subunit 3 family. In terms of assembly, NDH-1 is composed of 14 different subunits. Subunits NuoA, H, J, K, L, M, N constitute the membrane sector of the complex.

It localises to the cell inner membrane. It carries out the reaction a quinone + NADH + 5 H(+)(in) = a quinol + NAD(+) + 4 H(+)(out). NDH-1 shuttles electrons from NADH, via FMN and iron-sulfur (Fe-S) centers, to quinones in the respiratory chain. The immediate electron acceptor for the enzyme in this species is believed to be ubiquinone. Couples the redox reaction to proton translocation (for every two electrons transferred, four hydrogen ions are translocated across the cytoplasmic membrane), and thus conserves the redox energy in a proton gradient. This chain is NADH-quinone oxidoreductase subunit A 1, found in Citrifermentans bemidjiense (strain ATCC BAA-1014 / DSM 16622 / JCM 12645 / Bem) (Geobacter bemidjiensis).